The following is a 578-amino-acid chain: Lysine--tRNA ligase (578 aa).

Mg(2+) contacts are provided by Glu-414 and Glu-421.

The protein belongs to the class-II aminoacyl-tRNA synthetase family. Homodimer. Mg(2+) serves as cofactor.

It is found in the cytoplasm. It carries out the reaction tRNA(Lys) + L-lysine + ATP = L-lysyl-tRNA(Lys) + AMP + diphosphate. This chain is Lysine--tRNA ligase, found in Porphyromonas gingivalis (strain ATCC 33277 / DSM 20709 / CIP 103683 / JCM 12257 / NCTC 11834 / 2561).